The primary structure comprises 487 residues: Kynureninase 1 (487 aa).

Pyridoxal 5'-phosphate contacts are provided by residues Leu147, Thr148, 175 to 178 (FPSD), Ser232, Asp261, His264, and Tyr286. Lys287 bears the N6-(pyridoxal phosphate)lysine mark. Positions 327 and 355 each coordinate pyridoxal 5'-phosphate.

The protein belongs to the kynureninase family. In terms of assembly, homodimer. Pyridoxal 5'-phosphate is required as a cofactor.

It is found in the cytoplasm. The enzyme catalyses L-kynurenine + H2O = anthranilate + L-alanine + H(+). It catalyses the reaction 3-hydroxy-L-kynurenine + H2O = 3-hydroxyanthranilate + L-alanine + H(+). It participates in amino-acid degradation; L-kynurenine degradation; L-alanine and anthranilate from L-kynurenine: step 1/1. Its pathway is cofactor biosynthesis; NAD(+) biosynthesis; quinolinate from L-kynurenine: step 2/3. Its function is as follows. Catalyzes the cleavage of L-kynurenine (L-Kyn) and L-3-hydroxykynurenine (L-3OHKyn) into anthranilic acid (AA) and 3-hydroxyanthranilic acid (3-OHAA), respectively. This Aspergillus oryzae (strain ATCC 42149 / RIB 40) (Yellow koji mold) protein is Kynureninase 1 (bna5-1).